A 420-amino-acid chain; its full sequence is Serine protease inhibitor A3B (420 aa).

An N-terminal signal peptide occupies residues 1–17 (MAFIAALGLLMAEICPA). 2 N-linked (GlcNAc...) asparagine glycosylation sites follow: asparagine 104 and asparagine 349. An RCL region spans residues 367-392 (GTEGDAITIVGYNFMSAKLKPVFVKF).

It belongs to the serpin family.

It is found in the secreted. In Mus musculus (Mouse), this protein is Serine protease inhibitor A3B (Serpina3b).